A 150-amino-acid polypeptide reads, in one-letter code: Nucleoside diphosphate kinase (150 aa).

ATP is bound by residues K9, F57, R85, T91, R102, and N112. H115 functions as the Pros-phosphohistidine intermediate in the catalytic mechanism.

Belongs to the NDK family. In terms of assembly, homotetramer. Mg(2+) serves as cofactor.

It is found in the cytoplasm. It catalyses the reaction a 2'-deoxyribonucleoside 5'-diphosphate + ATP = a 2'-deoxyribonucleoside 5'-triphosphate + ADP. It carries out the reaction a ribonucleoside 5'-diphosphate + ATP = a ribonucleoside 5'-triphosphate + ADP. Major role in the synthesis of nucleoside triphosphates other than ATP. The ATP gamma phosphate is transferred to the NDP beta phosphate via a ping-pong mechanism, using a phosphorylated active-site intermediate. In Symbiobacterium thermophilum (strain DSM 24528 / JCM 14929 / IAM 14863 / T), this protein is Nucleoside diphosphate kinase.